A 283-amino-acid polypeptide reads, in one-letter code: 2-dehydro-3-deoxyphosphooctonate aldolase (283 aa).

Belongs to the KdsA family.

Its subcellular location is the cytoplasm. The catalysed reaction is D-arabinose 5-phosphate + phosphoenolpyruvate + H2O = 3-deoxy-alpha-D-manno-2-octulosonate-8-phosphate + phosphate. It participates in carbohydrate biosynthesis; 3-deoxy-D-manno-octulosonate biosynthesis; 3-deoxy-D-manno-octulosonate from D-ribulose 5-phosphate: step 2/3. It functions in the pathway bacterial outer membrane biogenesis; lipopolysaccharide biosynthesis. The polypeptide is 2-dehydro-3-deoxyphosphooctonate aldolase (Parasynechococcus marenigrum (strain WH8102)).